Here is a 484-residue protein sequence, read N- to C-terminus: Cobyric acid synthase (484 aa).

In terms of domain architecture, GATase cobBQ-type spans 251-438 (ALKIAVPVLP…LHGLFGSDAY (188 aa)). Cys-333 (nucleophile) is an active-site residue. The active site involves His-430.

Belongs to the CobB/CobQ family. CobQ subfamily.

Its pathway is cofactor biosynthesis; adenosylcobalamin biosynthesis. Its function is as follows. Catalyzes amidations at positions B, D, E, and G on adenosylcobyrinic A,C-diamide. NH(2) groups are provided by glutamine, and one molecule of ATP is hydrogenolyzed for each amidation. In Rhizobium leguminosarum bv. trifolii (strain WSM2304), this protein is Cobyric acid synthase.